Here is a 683-residue protein sequence, read N- to C-terminus: Putative boron transporter 5 (683 aa).

At M1 to G38 the chain is on the cytoplasmic side. A helical transmembrane segment spans residues F39 to F59. The Extracellular portion of the chain corresponds to G60–T80. Residues A81–A101 traverse the membrane as a helical segment. Topologically, residues E102 to Y126 are cytoplasmic. A helical membrane pass occupies residues L127–F147. Residues N148–R158 are Extracellular-facing. A helical transmembrane segment spans residues I159–G179. Over M180–E200 the chain is Cytoplasmic. Residues W201–L221 form a helical membrane-spanning segment. Residues K222 to S238 lie on the Extracellular side of the membrane. A helical transmembrane segment spans residues F239–T259. The Cytoplasmic segment spans residues P260–V294. A helical membrane pass occupies residues S295–F315. Residues D316–S335 lie on the Extracellular side of the membrane. A helical transmembrane segment spans residues A336–L356. The Cytoplasmic segment spans residues P357 to S477. The chain crosses the membrane as a helical span at residues L478 to L498. The Extracellular segment spans residues W499–G565. The helical transmembrane segment at V566–I586 threads the bilayer. Topologically, residues R587–E683 are cytoplasmic.

This sequence belongs to the anion exchanger (TC 2.A.31.3) family.

The protein localises to the membrane. Functionally, putative boron transporter. Boron is essential for maintaining the integrity of plants cell walls. This is Putative boron transporter 5 (BOR5) from Arabidopsis thaliana (Mouse-ear cress).